Here is a 399-residue protein sequence, read N- to C-terminus: Guanine nucleotide-binding protein G(f) subunit alpha (399 aa).

In terms of domain architecture, G-alpha spans 46–399 (TTVKILLLGT…SENVSSMGLF (354 aa)). Positions 49 to 62 (KILLLGTAESGKTT) are G1 motif. GTP contacts are provided by residues 54–61 (GTAESGKT), 188–194 (LHSRKIT), 221–225 (DVGGQ), 290–293 (NKYD), and Ala371. Residues 186-194 (DILHSRKIT) are G2 motif. Residue Thr194 coordinates Mg(2+). Residues 217-226 (FQMYDVGGQR) are G3 motif. Residues 286–293 (IVFLNKYD) are G4 motif. A G5 motif region spans residues 369-374 (TVATDT).

Belongs to the G-alpha family. In terms of assembly, g proteins are composed of 3 units; alpha, beta and gamma. The alpha chain contains the guanine nucleotide binding site. During embryogenesis, expressed primarily in the developing gut and transiently in the amnioserosa.

Functionally, guanine nucleotide-binding proteins (G proteins) are involved as modulators or transducers in various transmembrane signaling systems. In Drosophila melanogaster (Fruit fly), this protein is Guanine nucleotide-binding protein G(f) subunit alpha (Galphaf).